A 172-amino-acid polypeptide reads, in one-letter code: Shikimate kinase (172 aa).

14-19 (GAGKST) contributes to the ATP binding site. Serine 18 provides a ligand contact to Mg(2+). Positions 36, 60, and 82 each coordinate substrate. Arginine 120 is a binding site for ATP. Arginine 139 contributes to the substrate binding site. Glutamine 156 lines the ATP pocket.

It belongs to the shikimate kinase family. As to quaternary structure, monomer. It depends on Mg(2+) as a cofactor.

It is found in the cytoplasm. It catalyses the reaction shikimate + ATP = 3-phosphoshikimate + ADP + H(+). It functions in the pathway metabolic intermediate biosynthesis; chorismate biosynthesis; chorismate from D-erythrose 4-phosphate and phosphoenolpyruvate: step 5/7. In terms of biological role, catalyzes the specific phosphorylation of the 3-hydroxyl group of shikimic acid using ATP as a cosubstrate. The protein is Shikimate kinase of Aliivibrio fischeri (strain ATCC 700601 / ES114) (Vibrio fischeri).